The sequence spans 126 residues: Protein ApaG (126 aa).

Residues 2 to 126 (DVIQPCIKIQ…FRLAIPNVLN (125 aa)) enclose the ApaG domain.

This is Protein ApaG from Vibrio campbellii (strain ATCC BAA-1116).